Here is a 631-residue protein sequence, read N- to C-terminus: Pro-interleukin-16 (631 aa).

Disordered regions lie at residues 30-269 (ENPG…FPLT) and 317-344 (PKEG…ASDT). Residues 132-144 (SSSSSSIKQRISS) are compositionally biased toward low complexity. A Phosphoserine modification is found at Ser-221. Positions 322 to 344 (SPTSSSNEDSAANGSAETSASDT) are enriched in polar residues. Residues 405-501 (KQLDSIHVTI…IVTRKLTAES (97 aa)) form an interaction with PPP1R12A, PPP1R12B and PPP1R12C region. 2 consecutive PDZ domains span residues 411–496 (HVTI…VTRK) and 533–618 (TVTL…IRRK).

Homotetramer. Pro-interleukin-16 interacts (via PDZ 2 domain) with PPP1R12A, PPP1R12B and PPP1R12C. Pro-interleukin-16 interacts with GRIN2A. Pro-interleukin-16 interacts with GABPB1. Pro-interleukin-16 interacts (via PDZ 3 domain) with HDAC3.

Its subcellular location is the secreted. It is found in the cytoplasm. It localises to the nucleus. Interleukin-16 stimulates a migratory response in CD4+ lymphocytes, monocytes, and eosinophils. Primes CD4+ T-cells for IL-2 and IL-15 responsiveness. Also induces T-lymphocyte expression of interleukin 2 receptor. Ligand for CD4. Functionally, pro-interleukin-16 is involved in cell cycle progression in T-cells. Appears to be involved in transcriptional regulation of SKP2 and is probably part of a transcriptional repression complex on the core promoter of the SKP2 gene. May act as a scaffold for GABPB1 (the DNA-binding subunit the GABP transcription factor complex) and HDAC3 thus maintaining transcriptional repression and blocking cell cycle progression in resting T-cells. This Chlorocebus aethiops (Green monkey) protein is Pro-interleukin-16 (IL16).